Reading from the N-terminus, the 362-residue chain is MSAPVFDPATYDAQLAEKQQRLIELLAPFAAPEPEVFDSPREHYRLRAEFRLWREDGQRHYAMFAPGDKHTPILLDDFPIASLRINELMPRLRAAWRASEALSFKLFQVEFLTTLAGDALITLAYHRPLDEAWQAAAEKLASELNVSLVGRSRGQRLVIGRDYVEEELTVAGRRFRYRQPEGAFTQPNGAVCEKMLGWAYEALGERDDDLLELYCGNGNFTLPLATRVRRVLATEISKTSVNAALANLADNGVNNVELVRLSAEELTQALNEVRPFRRLAGIDLKSYDFGSVFVDPPRAGMDPDTCELTRRFERILYISCNPETLAANIAQLSDTHQVTRCALFDQFPYTHHMEAGVLLERR.

S-adenosyl-L-methionine is bound by residues Gln186, Tyr214, Asn219, Glu235, and Asp295. The active-site Nucleophile is the Cys320. Catalysis depends on Glu354, which acts as the Proton acceptor.

This sequence belongs to the class I-like SAM-binding methyltransferase superfamily. RNA M5U methyltransferase family. TrmA subfamily.

The catalysed reaction is uridine(54) in tRNA + S-adenosyl-L-methionine = 5-methyluridine(54) in tRNA + S-adenosyl-L-homocysteine + H(+). The enzyme catalyses uridine(341) in tmRNA + S-adenosyl-L-methionine = 5-methyluridine(341) in tmRNA + S-adenosyl-L-homocysteine + H(+). In terms of biological role, dual-specificity methyltransferase that catalyzes the formation of 5-methyluridine at position 54 (m5U54) in all tRNAs, and that of position 341 (m5U341) in tmRNA (transfer-mRNA). The chain is tRNA/tmRNA (uracil-C(5))-methyltransferase from Ectopseudomonas mendocina (strain ymp) (Pseudomonas mendocina).